We begin with the raw amino-acid sequence, 145 residues long: uncharacterized protein (145 aa).

This sequence belongs to the asfivirus K145R family.

Its subcellular location is the virion. This is an uncharacterized protein from African swine fever virus (isolate Tick/South Africa/Pretoriuskop Pr4/1996) (ASFV).